Consider the following 419-residue polypeptide: L-rhamnose isomerase (419 aa).

Residues histidine 262, aspartate 294, and aspartate 296 each contribute to the Mn(2+) site.

This sequence belongs to the rhamnose isomerase family. As to quaternary structure, homotetramer. The cofactor is Mn(2+).

The protein resides in the cytoplasm. The catalysed reaction is L-rhamnopyranose = L-rhamnulose. Its pathway is carbohydrate degradation; L-rhamnose degradation; glycerone phosphate from L-rhamnose: step 1/3. Functionally, catalyzes the interconversion of L-rhamnose and L-rhamnulose. This is L-rhamnose isomerase from Klebsiella pneumoniae (strain 342).